A 196-amino-acid polypeptide reads, in one-letter code: Rho-related protein racL (196 aa).

10–17 (GDGAVGKT) lines the GTP pocket. Positions 32-40 (YQPTVFDNF) match the Effector region motif. GTP contacts are provided by residues 57 to 61 (DTAGQ) and 116 to 119 (TQND). Cysteine 193 is modified (cysteine methyl ester). Residue cysteine 193 is the site of S-geranylgeranyl cysteine attachment. The propeptide at 194 to 196 (IIL) is removed in mature form.

Belongs to the small GTPase superfamily. Rho family.

The protein resides in the cell membrane. The sequence is that of Rho-related protein racL (racL) from Dictyostelium discoideum (Social amoeba).